A 463-amino-acid polypeptide reads, in one-letter code: Probable mannan endo-1,4-beta-mannosidase F (463 aa).

An N-terminal signal peptide occupies residues 1–18 (MRSLSSIALLSVVGAASA). Positions 19–54 (QAGPWAQCGGKSFSGSSECASGWKCQELNEWFSQCV) constitute a CBM1 domain. Positions 57–78 (AESTTPTVSSTPTPTDAPSVSI) are disordered. Over residues 59-77 (STTPTVSSTPTPTDAPSVS) the composition is skewed to low complexity. The tract at residues 75 to 118 (SVSITASATTGINKSISVSSASKSTPLPSSSSASPSPRPTGSGS) is ser-rich linker. N-linked (GlcNAc...) asparagine glycosylation is present at Asn87. Low complexity predominate over residues 93–118 (SSASKSTPLPSSSSASPSPRPTGSGS). A disordered region spans residues 93–121 (SSASKSTPLPSSSSASPSPRPTGSGSFAK). The segment at 119–463 (FAKADGLQFS…MDHMENVNKN (345 aa)) is catalytic. Substrate contacts are provided by Trp171 and Asn285. Residue Glu286 is the Proton donor of the active site. Substrate is bound at residue Tyr361. Glu395 (nucleophile) is an active-site residue. Residue Trp424 participates in substrate binding.

It belongs to the glycosyl hydrolase 5 (cellulase A) family.

The protein localises to the secreted. The catalysed reaction is Random hydrolysis of (1-&gt;4)-beta-D-mannosidic linkages in mannans, galactomannans and glucomannans.. Functionally, endo-1,4-mannanase, a crucial enzyme for depolymerization of seed galactomannans and wood galactoglucomannans. This Aspergillus flavus (strain ATCC 200026 / FGSC A1120 / IAM 13836 / NRRL 3357 / JCM 12722 / SRRC 167) protein is Probable mannan endo-1,4-beta-mannosidase F (manF).